The sequence spans 74 residues: Peptide Im-4 (74 aa).

The first 22 residues, 1 to 22 (MKFQYLLAIFMIVLVVTDHCQA), serve as a signal peptide directing secretion. A Lysine amide; partial modification is found at lysine 39. Residues 40-74 (GRRRRQLEARYEPQQRNFRKREIDFEKLFANMPDY) constitute a propeptide that is removed on maturation.

It belongs to the non-disulfide-bridged peptide (NDBP) superfamily. Short antimicrobial peptide (group 4) family. As to expression, expressed by the venom gland.

It localises to the secreted. It is found in the target cell membrane. Functionally, antimicrobial peptide that probably forms pores in target membranes. Has antibacterial activity against Gram-positive bacteria S.aureus NBRC 13276 (MIC=5-10 uM) and B.subtilis NBRC 3009 (MIC=2.5-5 uM) but not against Gram-negative bacterium E.coli NBRC 3972. This chain is Peptide Im-4, found in Isometrus maculatus (Lesser brown scorpion).